The following is a 350-amino-acid chain: Biotin synthase (350 aa).

Positions 41–265 constitute a Radical SAM core domain; the sequence is NEVQISRLLS…VMPLSRVRLS (225 aa). 3 residues coordinate [4Fe-4S] cluster: Cys56, Cys60, and Cys63. 4 residues coordinate [2Fe-2S] cluster: Cys100, Cys131, Cys191, and Arg263.

This sequence belongs to the radical SAM superfamily. Biotin synthase family. As to quaternary structure, homodimer. The cofactor is [4Fe-4S] cluster. [2Fe-2S] cluster is required as a cofactor.

The catalysed reaction is (4R,5S)-dethiobiotin + (sulfur carrier)-SH + 2 reduced [2Fe-2S]-[ferredoxin] + 2 S-adenosyl-L-methionine = (sulfur carrier)-H + biotin + 2 5'-deoxyadenosine + 2 L-methionine + 2 oxidized [2Fe-2S]-[ferredoxin]. It participates in cofactor biosynthesis; biotin biosynthesis; biotin from 7,8-diaminononanoate: step 2/2. Functionally, catalyzes the conversion of dethiobiotin (DTB) to biotin by the insertion of a sulfur atom into dethiobiotin via a radical-based mechanism. This chain is Biotin synthase, found in Shewanella loihica (strain ATCC BAA-1088 / PV-4).